The chain runs to 153 residues: 6,7-dimethyl-8-ribityllumazine synthase 1 (153 aa).

Residues phenylalanine 16, 47-49 (ALE), and 76-78 (MVI) each bind 5-amino-6-(D-ribitylamino)uracil. Residue 81 to 82 (ET) coordinates (2S)-2-hydroxy-3-oxobutyl phosphate. Histidine 84 serves as the catalytic Proton donor. Asparagine 109 provides a ligand contact to 5-amino-6-(D-ribitylamino)uracil. (2S)-2-hydroxy-3-oxobutyl phosphate is bound at residue arginine 123.

This sequence belongs to the DMRL synthase family.

It carries out the reaction (2S)-2-hydroxy-3-oxobutyl phosphate + 5-amino-6-(D-ribitylamino)uracil = 6,7-dimethyl-8-(1-D-ribityl)lumazine + phosphate + 2 H2O + H(+). Its pathway is cofactor biosynthesis; riboflavin biosynthesis; riboflavin from 2-hydroxy-3-oxobutyl phosphate and 5-amino-6-(D-ribitylamino)uracil: step 1/2. Catalyzes the formation of 6,7-dimethyl-8-ribityllumazine by condensation of 5-amino-6-(D-ribitylamino)uracil with 3,4-dihydroxy-2-butanone 4-phosphate. This is the penultimate step in the biosynthesis of riboflavin. This is 6,7-dimethyl-8-ribityllumazine synthase 1 from Rhizobium meliloti (strain 1021) (Ensifer meliloti).